We begin with the raw amino-acid sequence, 241 residues long: Phosphoribosylaminoimidazole-succinocarboxamide synthase (241 aa).

The protein belongs to the SAICAR synthetase family.

It catalyses the reaction 5-amino-1-(5-phospho-D-ribosyl)imidazole-4-carboxylate + L-aspartate + ATP = (2S)-2-[5-amino-1-(5-phospho-beta-D-ribosyl)imidazole-4-carboxamido]succinate + ADP + phosphate + 2 H(+). It participates in purine metabolism; IMP biosynthesis via de novo pathway; 5-amino-1-(5-phospho-D-ribosyl)imidazole-4-carboxamide from 5-amino-1-(5-phospho-D-ribosyl)imidazole-4-carboxylate: step 1/2. The sequence is that of Phosphoribosylaminoimidazole-succinocarboxamide synthase from Methanoculleus marisnigri (strain ATCC 35101 / DSM 1498 / JR1).